A 425-amino-acid polypeptide reads, in one-letter code: Protein let-756 (425 aa).

Disordered stretches follow at residues 277–298 and 314–425; these read LEEKKRRREKKKRRREDRLRKE and EEEL…QRYP. The span at 281-291 shows a compositional bias: basic residues; sequence KRRREKKKRRR. Over residues 329–340 the composition is skewed to polar residues; it reads ASTQTRYNRPQN. Positions 378–389 are enriched in basic residues; sequence HNSHHHHHHHPR. Residues 395 to 425 show a composition bias toward polar residues; the sequence is DPQQRHQSQQHYLAQTVSNPNRQNVNYQRYP.

It belongs to the heparin-binding growth factors family. As to quaternary structure, interacts with pal-1. Expressed in pharynx, CAN neuron and body wall muscles.

Its subcellular location is the nucleus. It localises to the membrane. Required for larval development. Probably by binding receptor egl-15, negatively regulates membrane protrusion from body wall muscles during larval development. This is Protein let-756 (let-756) from Caenorhabditis elegans.